The chain runs to 264 residues: Thiazole synthase (264 aa).

Lys98 functions as the Schiff-base intermediate with DXP in the catalytic mechanism. 1-deoxy-D-xylulose 5-phosphate contacts are provided by residues Gly159, 185-186 (AG), and 207-208 (AT).

It belongs to the ThiG family. In terms of assembly, homotetramer. Forms heterodimers with either ThiH or ThiS.

It localises to the cytoplasm. The catalysed reaction is [ThiS sulfur-carrier protein]-C-terminal-Gly-aminoethanethioate + 2-iminoacetate + 1-deoxy-D-xylulose 5-phosphate = [ThiS sulfur-carrier protein]-C-terminal Gly-Gly + 2-[(2R,5Z)-2-carboxy-4-methylthiazol-5(2H)-ylidene]ethyl phosphate + 2 H2O + H(+). The protein operates within cofactor biosynthesis; thiamine diphosphate biosynthesis. In terms of biological role, catalyzes the rearrangement of 1-deoxy-D-xylulose 5-phosphate (DXP) to produce the thiazole phosphate moiety of thiamine. Sulfur is provided by the thiocarboxylate moiety of the carrier protein ThiS. In vitro, sulfur can be provided by H(2)S. The sequence is that of Thiazole synthase from Mycobacterium marinum (strain ATCC BAA-535 / M).